A 400-amino-acid chain; its full sequence is D(3) dopamine receptor (400 aa).

The Extracellular portion of the chain corresponds to 1 to 32; sequence MAPLSQLSGHLNYTCGVENSTGASQARPHAYY. Asn12 and Asn19 each carry an N-linked (GlcNAc...) asparagine glycan. Residues 33–55 form a helical membrane-spanning segment; sequence ALSYCALILAIVFGNGLVCMAVL. Topologically, residues 56-65 are cytoplasmic; it reads KERALQTTTN. Residues 66–88 form a helical membrane-spanning segment; it reads YLVVSLAVADLLVATLVMPWVVY. Residues 89 to 104 are Extracellular-facing; the sequence is LEVTGGVWNFSRVCCD. The N-linked (GlcNAc...) asparagine glycan is linked to Asn97. A disulfide bridge links Cys103 with Cys181. Residues 105–126 traverse the membrane as a helical segment; sequence VFVTLDVMMCTASILNLCAISI. Residues 127-149 lie on the Cytoplasmic side of the membrane; it reads DRYTAVVMPVHYQHGTGQSSCRR. The helical transmembrane segment at 150–170 threads the bilayer; that stretch reads VTLMITAVWVLAFAVSCPLLF. At 171 to 187 the chain is on the extracellular side; that stretch reads GFNTTGDPTVCSISNPD. Asn173 is a glycosylation site (N-linked (GlcNAc...) asparagine). A helical membrane pass occupies residues 188-209; that stretch reads FVIYSSVVSFYLPFGVTVLVYA. Residues 210 to 329 are Cytoplasmic-facing; the sequence is RIYVVLKQRR…VPLREKKATQ (120 aa). Residues 330 to 351 form a helical membrane-spanning segment; sequence MVAIVLGAFIVCWLPFFLTHVL. The Extracellular segment spans residues 352 to 366; that stretch reads NTHCQTCHVSPELYS. A disulfide bridge connects residues Cys355 and Cys358. The helical transmembrane segment at 367–386 threads the bilayer; the sequence is ATTWLGYVNSALNPVIYTTF. The Cytoplasmic portion of the chain corresponds to 387 to 400; sequence NIEFRKAFLKILSC.

Belongs to the G-protein coupled receptor 1 family. In terms of assembly, interacts with CLIC6. Interacts with GRK4. Interacts with PALM. Interacts with FLNA (via filamin repeat 21); increases PKA-mediated phosphorylation of FLNA. Phosphorylated by GRK4. Post-translationally, palmitoylated.

The protein resides in the cell membrane. Dopamine receptor whose activity is mediated by G proteins which inhibit adenylyl cyclase. Promotes cell proliferation. The polypeptide is D(3) dopamine receptor (DRD3) (Chlorocebus aethiops (Green monkey)).